We begin with the raw amino-acid sequence, 140 residues long: Large ribosomal subunit protein uL16 (140 aa).

It belongs to the universal ribosomal protein uL16 family. In terms of assembly, part of the 50S ribosomal subunit.

Functionally, binds 23S rRNA and is also seen to make contacts with the A and possibly P site tRNAs. The protein is Large ribosomal subunit protein uL16 of Amoebophilus asiaticus (strain 5a2).